The primary structure comprises 744 residues: Phosphoribosylformylglycinamidine synthase subunit PurL (744 aa).

Residue His45 is part of the active site. Residues Tyr48 and Lys87 each coordinate ATP. Mg(2+) is bound at residue Glu89. Residues 90–93 and Arg112 contribute to the substrate site; that span reads SHNH. His91 (proton acceptor) is an active-site residue. Asp113 lines the Mg(2+) pocket. Gln236 is a substrate binding site. Asp264 contacts Mg(2+). 308-310 serves as a coordination point for substrate; the sequence is ESQ. The ATP site is built by Asn492 and Gly529. Asn530 is a Mg(2+) binding site. Ser532 contacts substrate.

The protein belongs to the FGAMS family. Monomer. Part of the FGAM synthase complex composed of 1 PurL, 1 PurQ and 2 PurS subunits.

The protein resides in the cytoplasm. The enzyme catalyses N(2)-formyl-N(1)-(5-phospho-beta-D-ribosyl)glycinamide + L-glutamine + ATP + H2O = 2-formamido-N(1)-(5-O-phospho-beta-D-ribosyl)acetamidine + L-glutamate + ADP + phosphate + H(+). It functions in the pathway purine metabolism; IMP biosynthesis via de novo pathway; 5-amino-1-(5-phospho-D-ribosyl)imidazole from N(2)-formyl-N(1)-(5-phospho-D-ribosyl)glycinamide: step 1/2. Its function is as follows. Part of the phosphoribosylformylglycinamidine synthase complex involved in the purines biosynthetic pathway. Catalyzes the ATP-dependent conversion of formylglycinamide ribonucleotide (FGAR) and glutamine to yield formylglycinamidine ribonucleotide (FGAM) and glutamate. The FGAM synthase complex is composed of three subunits. PurQ produces an ammonia molecule by converting glutamine to glutamate. PurL transfers the ammonia molecule to FGAR to form FGAM in an ATP-dependent manner. PurS interacts with PurQ and PurL and is thought to assist in the transfer of the ammonia molecule from PurQ to PurL. The chain is Phosphoribosylformylglycinamidine synthase subunit PurL from Erythrobacter litoralis (strain HTCC2594).